Reading from the N-terminus, the 132-residue chain is DNA-entry nuclease inhibitor (132 aa).

In terms of assembly, this protein is a subunit of a 75 kDa protein complex, which governs binding and entry of donor DNA. The complex is a tetramer of two subunits of the DNA-entry nuclease and two subunits of a competence-specific protein. Only the complex is able to bind ds- and ss-DNA.

The protein resides in the cell membrane. Its function is as follows. Plays a role in the competence of cells to be transformed. It inhibits the activity of the DNA-entry nuclease. This chain is DNA-entry nuclease inhibitor (nin), found in Bacillus subtilis (strain 168).